We begin with the raw amino-acid sequence, 212 residues long: Probable chemoreceptor glutamine deamidase CheD (212 aa).

The protein belongs to the CheD family.

The enzyme catalyses L-glutaminyl-[protein] + H2O = L-glutamyl-[protein] + NH4(+). Functionally, probably deamidates glutamine residues to glutamate on methyl-accepting chemotaxis receptors (MCPs), playing an important role in chemotaxis. The sequence is that of Probable chemoreceptor glutamine deamidase CheD from Oleidesulfovibrio alaskensis (strain ATCC BAA-1058 / DSM 17464 / G20) (Desulfovibrio alaskensis).